A 600-amino-acid polypeptide reads, in one-letter code: UvrABC system protein C (600 aa).

In terms of domain architecture, GIY-YIG spans N15–I100. The UVR domain maps to S203–L238.

This sequence belongs to the UvrC family. In terms of assembly, interacts with UvrB in an incision complex.

It localises to the cytoplasm. Functionally, the UvrABC repair system catalyzes the recognition and processing of DNA lesions. UvrC both incises the 5' and 3' sides of the lesion. The N-terminal half is responsible for the 3' incision and the C-terminal half is responsible for the 5' incision. The protein is UvrABC system protein C of Campylobacter jejuni subsp. jejuni serotype O:23/36 (strain 81-176).